A 373-amino-acid polypeptide reads, in one-letter code: MTNRWSFDVNKNLVTVLFTWLCLSISTAHAARIKDVAEVAGVRSNQLIGYGLVSGLPGTGESTPFTDQSFNAMLQNFGIQLPPGTKPKTKNVAAVMVTATLPPFSKQGQVVDVTVSSVGSAKSLRGGTLLQTFLKGLDGKTYAIAQGNLIVSGFSATGADGSKIVGNNPTVGRISGGAMVEREVPSPFGRGDFITFNLLESDFTTAQRMADAVNNFLGPNMASAVDATSVRVRAPRDISQRVAFLSAVENVDFDPADGSAKIIVNSRTGTIVVGKHVKLKPAAVTHGGMTVAIKENLQVSQPGPFSDGQTVVTPDSDIEVTEEQGKMFKFEPGLTLDDLVRAVNEVGAAPSDLMAILQALKQAGAIEGQLIII.

A signal peptide spans 1–30 (MTNRWSFDVNKNLVTVLFTWLCLSISTAHA).

The protein belongs to the FlgI family. The basal body constitutes a major portion of the flagellar organelle and consists of four rings (L,P,S, and M) mounted on a central rod.

The protein localises to the periplasm. The protein resides in the bacterial flagellum basal body. Its function is as follows. Assembles around the rod to form the L-ring and probably protects the motor/basal body from shearing forces during rotation. This chain is Flagellar P-ring protein, found in Aliivibrio fischeri (strain ATCC 700601 / ES114) (Vibrio fischeri).